The primary structure comprises 133 residues: Homeobox protein HD-5 (133 aa).

Positions 34-93 form a DNA-binding region, homeobox; the sequence is SKRSRLKLSGQQIDVLESNFKIDSHPNSATKSLLSNALSIPLKNIQIWFQNRRAKEKTAR. The interval 86 to 109 is disordered; it reads RAKEKTARDGGRRRSGNAEIEDGE.

It is found in the nucleus. The polypeptide is Homeobox protein HD-5 (HD-5) (Encephalitozoon cuniculi (strain GB-M1) (Microsporidian parasite)).